A 129-amino-acid polypeptide reads, in one-letter code: Small ribosomal subunit protein uS11 (129 aa).

It belongs to the universal ribosomal protein uS11 family. Part of the 30S ribosomal subunit. Interacts with proteins S7 and S18. Binds to IF-3.

Functionally, located on the platform of the 30S subunit, it bridges several disparate RNA helices of the 16S rRNA. Forms part of the Shine-Dalgarno cleft in the 70S ribosome. The sequence is that of Small ribosomal subunit protein uS11 from Thermosipho melanesiensis (strain DSM 12029 / CIP 104789 / BI429).